We begin with the raw amino-acid sequence, 319 residues long: Acetyl-coenzyme A carboxylase carboxyl transferase subunit alpha (319 aa).

Positions 35–296 (NIDEEVHRLR…KAQLLEDLAD (262 aa)) constitute a CoA carboxyltransferase C-terminal domain.

This sequence belongs to the AccA family. As to quaternary structure, acetyl-CoA carboxylase is a heterohexamer composed of biotin carboxyl carrier protein (AccB), biotin carboxylase (AccC) and two subunits each of ACCase subunit alpha (AccA) and ACCase subunit beta (AccD).

Its subcellular location is the cytoplasm. It catalyses the reaction N(6)-carboxybiotinyl-L-lysyl-[protein] + acetyl-CoA = N(6)-biotinyl-L-lysyl-[protein] + malonyl-CoA. Its pathway is lipid metabolism; malonyl-CoA biosynthesis; malonyl-CoA from acetyl-CoA: step 1/1. In terms of biological role, component of the acetyl coenzyme A carboxylase (ACC) complex. First, biotin carboxylase catalyzes the carboxylation of biotin on its carrier protein (BCCP) and then the CO(2) group is transferred by the carboxyltransferase to acetyl-CoA to form malonyl-CoA. This chain is Acetyl-coenzyme A carboxylase carboxyl transferase subunit alpha, found in Salmonella arizonae (strain ATCC BAA-731 / CDC346-86 / RSK2980).